Reading from the N-terminus, the 262-residue chain is Dehydrin COR410 (262 aa).

2 disordered regions span residues 1 to 153 and 187 to 262; these read MEDE…HDTD and LPGG…KPSA. Basic and acidic residues-rich tracts occupy residues 34 to 45 and 53 to 74; these read KKAEEDKEKEEE and VSVE…KETL. The segment covering 89-101 has biased composition (acidic residues); sequence SDEEEEEVIDDNG. 2 repeat units span residues 106-126 and 173-193. The segment at 106-245 is 3 X 21 AA repeats, Lys-rich; it reads RKKKKGLKEK…MDKLPGYHKT (140 aa). Basic and acidic residues-rich tracts occupy residues 113-130 and 187-196; these read KEKL…EGEH and LPGGHKKPED. Low complexity predominate over residues 197-209; the sequence is AAAVPVTHAAPAP. Repeat 3 spans residues 225 to 245; that stretch reads AKEKKGLLGKIMDKLPGYHKT. Over residues 244 to 262 the composition is skewed to basic and acidic residues; the sequence is KTGEEDKAAAATGEHKPSA.

As to expression, expressed in roots, crown and leaves during cold acclimation.

In Triticum aestivum (Wheat), this protein is Dehydrin COR410 (COR410).